Consider the following 570-residue polypeptide: Urease subunit alpha 1 (570 aa).

The Urease domain occupies 131 to 570 (GGIDTHVHFI…VPMAQRYFLF (440 aa)). Ni(2+)-binding residues include histidine 136, histidine 138, and lysine 219. Lysine 219 carries the N6-carboxylysine modification. Residue histidine 221 participates in substrate binding. Residues histidine 248 and histidine 274 each contribute to the Ni(2+) site. Histidine 322 serves as the catalytic Proton donor. Aspartate 362 lines the Ni(2+) pocket.

It belongs to the metallo-dependent hydrolases superfamily. Urease alpha subunit family. In terms of assembly, heterotrimer of UreA (gamma), UreB (beta) and UreC (alpha) subunits. Three heterotrimers associate to form the active enzyme. Ni cation is required as a cofactor. In terms of processing, carboxylation allows a single lysine to coordinate two nickel ions.

It is found in the cytoplasm. The catalysed reaction is urea + 2 H2O + H(+) = hydrogencarbonate + 2 NH4(+). The protein operates within nitrogen metabolism; urea degradation; CO(2) and NH(3) from urea (urease route): step 1/1. Disrupting the ure1 operon causes loss of urease activity, decreased resistance to low pH killing in vitro and decreased pathogen survival when inoculated in BALB/c mice by gavage. The chain is Urease subunit alpha 1 from Brucella suis biovar 1 (strain 1330).